Consider the following 257-residue polypeptide: Beta-fibrinogenase mucrofibrase-5 (257 aa).

Positions 1–18 are cleaved as a signal peptide; sequence MVLIRVLANLLILQLSYA. Positions 19–24 are excised as a propeptide; it reads QKSSEL. A Peptidase S1 domain is found at 25–248; it reads IIGGDECNIN…HLDWIKGIIA (224 aa). 6 disulfides stabilise this stretch: cysteine 31–cysteine 162, cysteine 49–cysteine 65, cysteine 97–cysteine 255, cysteine 141–cysteine 209, cysteine 173–cysteine 188, and cysteine 199–cysteine 224. Histidine 64 acts as the Charge relay system in catalysis. N-linked (GlcNAc...) asparagine glycosylation occurs at asparagine 102. Residue aspartate 109 is the Charge relay system of the active site. Serine 203 (charge relay system) is an active-site residue.

Belongs to the peptidase S1 family. Snake venom subfamily. Monomer. In terms of tissue distribution, expressed by the venom gland.

The protein localises to the secreted. Snake venom serine protease with strong beta-fibrinogenolytic activities, angiotensin I (AGT)-degrading activities and strong kallikrein-like activities in vitro, releasing bradykinin from kininogen (KNG1). Intravenous injection mildly lowers blood pressure in experimental rats, which may be explained by the action on angiotensin I and kininogen. Exhibits amidase activity against N-benzoyl-Pro-Phe-Arg-p-nitroanilide in vitro. The sequence is that of Beta-fibrinogenase mucrofibrase-5 from Protobothrops mucrosquamatus (Taiwan habu).